The primary structure comprises 263 residues: Protein IQ-DOMAIN 9 (263 aa).

The segment at 16-41 is disordered; it reads SKQGTEKKKTSAVKPKKGSKKKGTSL. Residues 21-28 carry the Nuclear localization signal 1 motif; sequence EKKKTSAV. A compositionally biased stretch (basic residues) spans 25–38; sequence TSAVKPKKGSKKKG. One can recognise an IQ domain in the interval 46 to 75; the sequence is EDWAATRIQTAFKAYKARKSLRRLKGIARA. The tract at residues 59–78 is calmodulin-binding; that stretch reads AYKARKSLRRLKGIARAKLS. Positions 107–114 match the Nuclear localization signal 2 motif; the sequence is ARRVCMVT. Positions 216–263 are disordered; it reads TPKKPKSSKTDSNSPAKRTVSLSSVPAKTPFPGARNTVKPRRLSFPGA. Residues 226–241 show a composition bias toward polar residues; that stretch reads DSNSPAKRTVSLSSVP.

It belongs to the IQD family. In terms of assembly, binds to multiple calmodulin (CaM) in the presence of Ca(2+) and CaM-like proteins.

The protein resides in the nucleus. It is found in the nuclear body. In terms of biological role, may be involved in cooperative interactions with calmodulins or calmodulin-like proteins. Recruits calmodulin proteins to microtubules, thus being a potential scaffold in cellular signaling and trafficking. May associate with nucleic acids and regulate gene expression at the transcriptional or post-transcriptional level. The sequence is that of Protein IQ-DOMAIN 9 from Arabidopsis thaliana (Mouse-ear cress).